A 704-amino-acid chain; its full sequence is PHD finger protein MALE MEIOCYTE DEATH 1 (704 aa).

The segment at 606–656 (MVKCICRARDDDGERMISCDVCEVWQHTRCCGIDDSDTLPPLFVCSNCCEE) adopts a PHD-type zinc-finger fold. Residues Cys609, Cys611, Cys624, Cys627, His632, Cys635, Cys650, and Cys653 each coordinate Zn(2+).

In terms of assembly, interacts with JMJ16 in the nucleus of male meiocytes, especially on pachytene chromosomes. As to expression, expressed in inflorescence, specifically in male meiocytes.

The protein localises to the nucleus. Functionally, probable transcription factor required for chromosome organization and progression during male meiosis (e.g. microsporogenesis). Necessary for fertility and meiotic progressive compaction of prophase I chromosomes to metaphase I bivalents. Together with JMJ16, promotes gene expression in male meiocytes in an H3K9me3-dependent manner, and contributes to meiotic chromosome condensation by triggering some condensin promoters (e.g. CAP-D3 and CAP-H). This Arabidopsis thaliana (Mouse-ear cress) protein is PHD finger protein MALE MEIOCYTE DEATH 1.